We begin with the raw amino-acid sequence, 285 residues long: Bifunctional protein FolD (285 aa).

Residues 165–167 (GRG), threonine 192, and valine 233 each bind NADP(+).

It belongs to the tetrahydrofolate dehydrogenase/cyclohydrolase family. Homodimer.

It catalyses the reaction (6R)-5,10-methylene-5,6,7,8-tetrahydrofolate + NADP(+) = (6R)-5,10-methenyltetrahydrofolate + NADPH. It carries out the reaction (6R)-5,10-methenyltetrahydrofolate + H2O = (6R)-10-formyltetrahydrofolate + H(+). The protein operates within one-carbon metabolism; tetrahydrofolate interconversion. Its function is as follows. Catalyzes the oxidation of 5,10-methylenetetrahydrofolate to 5,10-methenyltetrahydrofolate and then the hydrolysis of 5,10-methenyltetrahydrofolate to 10-formyltetrahydrofolate. The sequence is that of Bifunctional protein FolD from Mycobacterium sp. (strain MCS).